A 154-amino-acid chain; its full sequence is 6,7-dimethyl-8-ribityllumazine synthase (154 aa).

Residues Phe-22, 56–58 (AFE), and 80–82 (AVI) contribute to the 5-amino-6-(D-ribitylamino)uracil site. A (2S)-2-hydroxy-3-oxobutyl phosphate-binding site is contributed by 85 to 86 (ET). Catalysis depends on His-88, which acts as the Proton donor. Phe-113 provides a ligand contact to 5-amino-6-(D-ribitylamino)uracil. A (2S)-2-hydroxy-3-oxobutyl phosphate-binding site is contributed by Arg-127.

This sequence belongs to the DMRL synthase family.

It carries out the reaction (2S)-2-hydroxy-3-oxobutyl phosphate + 5-amino-6-(D-ribitylamino)uracil = 6,7-dimethyl-8-(1-D-ribityl)lumazine + phosphate + 2 H2O + H(+). The protein operates within cofactor biosynthesis; riboflavin biosynthesis; riboflavin from 2-hydroxy-3-oxobutyl phosphate and 5-amino-6-(D-ribitylamino)uracil: step 1/2. Catalyzes the formation of 6,7-dimethyl-8-ribityllumazine by condensation of 5-amino-6-(D-ribitylamino)uracil with 3,4-dihydroxy-2-butanone 4-phosphate. This is the penultimate step in the biosynthesis of riboflavin. This is 6,7-dimethyl-8-ribityllumazine synthase from Thermoanaerobacter pseudethanolicus (strain ATCC 33223 / 39E) (Clostridium thermohydrosulfuricum).